We begin with the raw amino-acid sequence, 277 residues long: WRKY transcription factor 68 (277 aa).

Positions 51–96 (TPLMHFPTTPNSSSSEAVNGDDEEEEDGEEQQHKTKKRFKFTKMSR) are disordered. The span at 58–67 (TTPNSSSSEA) shows a compositional bias: polar residues. The segment covering 69–79 (NGDDEEEEDGE) has biased composition (acidic residues). The span at 84–96 (KTKKRFKFTKMSR) shows a compositional bias: basic residues. Positions 112–177 (SEVLHLDDGY…YEGQHTHPRP (66 aa)) form a DNA-binding region, WRKY. A disordered region spans residues 183–206 (KEGSSPSNGSASRAHIGLPTLPPQ).

The protein belongs to the WRKY group II-c family.

The protein resides in the nucleus. Its function is as follows. Transcription factor. Interacts specifically with the W box (5'-(T)TGAC[CT]-3'), a frequently occurring elicitor-responsive cis-acting element. The protein is WRKY transcription factor 68 (WRKY68) of Arabidopsis thaliana (Mouse-ear cress).